A 412-amino-acid polypeptide reads, in one-letter code: Serine hydroxymethyltransferase (412 aa).

(6S)-5,6,7,8-tetrahydrofolate is bound by residues Leu117 and 121–123; that span reads GHL. An N6-(pyridoxal phosphate)lysine modification is found at Lys226. Residues Glu242 and 350–352 contribute to the (6S)-5,6,7,8-tetrahydrofolate site; that span reads SPF.

The protein belongs to the SHMT family. Homodimer. Pyridoxal 5'-phosphate is required as a cofactor.

The protein localises to the cytoplasm. It catalyses the reaction (6R)-5,10-methylene-5,6,7,8-tetrahydrofolate + glycine + H2O = (6S)-5,6,7,8-tetrahydrofolate + L-serine. It functions in the pathway one-carbon metabolism; tetrahydrofolate interconversion. It participates in amino-acid biosynthesis; glycine biosynthesis; glycine from L-serine: step 1/1. Functionally, catalyzes the reversible interconversion of serine and glycine with tetrahydrofolate (THF) serving as the one-carbon carrier. Also exhibits THF-independent aldolase activity toward beta-hydroxyamino acids, producing glycine and aldehydes, via a retro-aldol mechanism. This chain is Serine hydroxymethyltransferase, found in Methanosarcina mazei (strain ATCC BAA-159 / DSM 3647 / Goe1 / Go1 / JCM 11833 / OCM 88) (Methanosarcina frisia).